Consider the following 1014-residue polypeptide: Calcium-transporting ATPase 2, plasma membrane-type (1014 aa).

At methionine 1 the chain carries N-acetylmethionine. Residues 1–160 (MESYLNENFD…NKFAESEMRG (160 aa)) lie on the Cytoplasmic side of the membrane. An interaction with calmodulin region spans residues 20–31 (VLEKWRNLCGVV). Serine 45 bears the Phosphoserine; by CPK1 mark. The helical transmembrane segment at 161–181 (FWVFVWEALQDMTLMILGVCA) threads the bilayer. The Lumenal portion of the chain corresponds to 182–199 (FVSLIVGIATEGWPKGSH). Residues 200-220 (DGLGIAASILLVVFVTATSDY) traverse the membrane as a helical segment. The Cytoplasmic segment spans residues 221 to 348 (RQSLQFRDLD…DDETPLQVKL (128 aa)). The helical transmembrane segment at 349–368 (NGVATIIGKIGLFFAVVTFA) threads the bilayer. Over 369 to 398 (VLVQGMFMRKLSTGTHWVWSGDEALELLEY) the chain is Lumenal. Residues 399-416 (FAIAVTIVVVAVPEGLPL) form a helical membrane-spanning segment. Over 417–810 (AVTLSLAFAM…KWGRSVYINI (394 aa)) the chain is Cytoplasmic. The 4-aspartylphosphate intermediate role is filled by aspartate 454. 2 residues coordinate Mg(2+): aspartate 755 and aspartate 759. The helical transmembrane segment at 811 to 829 (QKFVQFQLTVNVVALVVNF) threads the bilayer. The Lumenal segment spans residues 830-840 (SSACLTGSAPL). Residues 841 to 861 (TAVQLLWVNMIMDTLGALALA) form a helical membrane-spanning segment. Topologically, residues 862 to 881 (TEPPNDELMKRLPVGRRGNF) are cytoplasmic. Residues 882-904 (ITNAMWRNILGQAVYQFIVIWIL) form a helical membrane-spanning segment. Over 905-916 (QAKGKAMFGLDG) the chain is Lumenal. The chain crosses the membrane as a helical span at residues 917 to 938 (PDSTLMLNTLIFNCFVFCQVFN). Residues 939–956 (EISSREMEEIDVFKGILD) are Cytoplasmic-facing. A helical membrane pass occupies residues 957-978 (NYVFVVVIGATVFFQIIIIEFL). Topologically, residues 979-988 (GTFASTTPLT) are lumenal. The helical transmembrane segment at 989–1010 (ITQWIFSIFIGFLGMPIAAGLK) threads the bilayer. Over 1011–1014 (TIPV) the chain is Cytoplasmic.

Belongs to the cation transport ATPase (P-type) (TC 3.A.3) family. Type IIB subfamily.

The protein resides in the endoplasmic reticulum membrane. It catalyses the reaction Ca(2+)(in) + ATP + H2O = Ca(2+)(out) + ADP + phosphate + H(+). With respect to regulation, activated by calmodulin. In terms of biological role, this magnesium-dependent enzyme catalyzes the hydrolysis of ATP coupled with the translocation of calcium from the cytosol into the endoplasmic reticulum. The polypeptide is Calcium-transporting ATPase 2, plasma membrane-type (ACA2) (Arabidopsis thaliana (Mouse-ear cress)).